The primary structure comprises 430 residues: Pyrroloquinoline quinone-dependent sugar dehydrogenase (430 aa).

The first 23 residues, 1–23 (MARLAPHTLLLALFVFLFGSCTA), serve as a signal peptide directing secretion. A glycan (N-linked (GlcNAc...) asparagine) is linked at N25. R57 serves as a coordination point for pyrroloquinoline quinone. N-linked (GlcNAc...) asparagine glycosylation is found at N94 and N147. H153 serves as a coordination point for pyrroloquinoline quinone. N-linked (GlcNAc...) asparagine glycosylation occurs at N184. Position 220 (R220) interacts with pyrroloquinoline quinone. 2 residues coordinate Ca(2+): S240 and D242. The cysteines at positions 281 and 316 are disulfide-linked. N306 carries N-linked (GlcNAc...) asparagine glycosylation. H330 provides a ligand contact to pyrroloquinoline quinone. N-linked (GlcNAc...) asparagine glycosylation occurs at N341. H350 provides a ligand contact to pyrroloquinoline quinone. A disulfide bridge connects residues C388 and C392.

Belongs to the sugar dehydrogenase AA12 family. It depends on Ca(2+) as a cofactor. Pyrroloquinoline quinone serves as cofactor.

Its subcellular location is the secreted. In terms of biological role, pyrroloquinoline quinone (PPQ)-dependent oxidoreductase that catalyzes the oxidation of various sugars such as L-fucose. This chain is Pyrroloquinoline quinone-dependent sugar dehydrogenase, found in Hypocrea jecorina (strain QM6a) (Trichoderma reesei).